The sequence spans 308 residues: tRNA dimethylallyltransferase (308 aa).

14–21 (GPTASGKS) serves as a coordination point for ATP. Substrate is bound at residue 16 to 21 (TASGKS). The interaction with substrate tRNA stretch occupies residues 39 to 42 (DSMQ).

Belongs to the IPP transferase family. Monomer. Mg(2+) is required as a cofactor.

It catalyses the reaction adenosine(37) in tRNA + dimethylallyl diphosphate = N(6)-dimethylallyladenosine(37) in tRNA + diphosphate. Its function is as follows. Catalyzes the transfer of a dimethylallyl group onto the adenine at position 37 in tRNAs that read codons beginning with uridine, leading to the formation of N6-(dimethylallyl)adenosine (i(6)A). This chain is tRNA dimethylallyltransferase, found in Bradyrhizobium sp. (strain ORS 278).